Reading from the N-terminus, the 479-residue chain is Protein TRIGALACTOSYLDIACYLGLYCEROL 4, chloroplastic (479 aa).

The chain crosses the lipid bilayer at residues 288–310 (VFLSSPHVAVSGIIGSVMTAAFG).

As to quaternary structure, homodimer. Forms dimeric beta-barrel. Interacts with TGD5.

The protein resides in the plastid. It localises to the chloroplast outer membrane. Its subcellular location is the endoplasmic reticulum. In terms of biological role, involved in lipid transfer from the endoplasmic reticulum (ER) to plastids. Specifically binds phosphatidic acid (PtdOH). The sequence is that of Protein TRIGALACTOSYLDIACYLGLYCEROL 4, chloroplastic from Arabidopsis thaliana (Mouse-ear cress).